A 706-amino-acid polypeptide reads, in one-letter code: Lysophospholipase 2 (706 aa).

The N-terminal stretch at 1 to 19 is a signal peptide; sequence MQLRNILQASSLISGLSLA. The PLA2c domain maps to 36–588; sequence PCPSDDTSLV…ADYCWNGTLS (553 aa). N-linked (GlcNAc...) asparagine glycans are attached at residues N47, N80, N94, N125, N162, N181, N193, N217, N279, N309, N365, N390, N491, N515, N524, N543, N567, N584, N598, N630, N634, N642, N648, N652, and N658. The disordered stretch occupies residues 627 to 672; the sequence is TSGNTTSNSTTSTSSNVTSNSNSSSNTTLNSNSSSSSISSSTARSS. The GPI-anchor amidated asparagine moiety is linked to residue N680. A propeptide spans 681–706 (removed in mature form); sequence AAAISYANTNTLMSLLGAITALFGLI.

This sequence belongs to the lysophospholipase family. The GPI-anchor is attached to the protein in the endoplasmic reticulum and serves to target the protein to the cell surface. There, the glucosamine-inositol phospholipid moiety is cleaved off and the GPI-modified mannoprotein is covalently attached via its lipidless GPI glycan remnant to the 1,6-beta-glucan of the outer cell wall layer.

Its subcellular location is the secreted. It is found in the cell wall. It localises to the membrane. The catalysed reaction is a 1-acyl-sn-glycero-3-phosphocholine + H2O = sn-glycerol 3-phosphocholine + a fatty acid + H(+). The enzyme catalyses 1-hexadecanoyl-sn-glycero-3-phosphoethanolamine + H2O = sn-glycero-3-phosphoethanolamine + hexadecanoate + H(+). It carries out the reaction 1-hexadecanoyl-sn-glycero-3-phosphocholine + H2O = sn-glycerol 3-phosphocholine + hexadecanoate + H(+). It catalyses the reaction 1-hexadecanoyl-sn-glycero-3-phospho-L-serine + H2O = sn-glycero-3-phospho-L-serine + hexadecanoate + H(+). The catalysed reaction is 1,2-dihexadecanoyl-sn-glycero-3-phosphocholine + H2O = 1-hexadecanoyl-sn-glycero-3-phosphocholine + hexadecanoate + H(+). Sequentially removes both fatty acyl groups from diacylglycerophospholipids and therefore has both phospholipase A and lysophospholipase activities. However, it does not display transacylase activity. Substrate preference is phosphatidylserine &gt; phosphatidylinositol &gt; phosphatidylcholine &gt; phosphatidylethanolamine. The substrate specificity is pH- and ion-dependent. In contrast with activities observed at optimum pH 3.5, the order of substrate preference at pH 5.5 is phosphatidylserine = phosphatidylethanolamine &gt; phosphatidylcholine &gt; phosphatidylinositol. This Saccharomyces cerevisiae (strain ATCC 204508 / S288c) (Baker's yeast) protein is Lysophospholipase 2 (PLB2).